Consider the following 118-residue polypeptide: D-dopachrome decarboxylase (118 aa).

An N-acetylproline modification is found at proline 2. The residue at position 33 (lysine 33) is an N6-acetyllysine. Serine 90 is modified (phosphoserine).

The protein belongs to the MIF family. As to quaternary structure, homotrimer.

The protein localises to the cytoplasm. It carries out the reaction D-dopachrome + H(+) = 5,6-dihydroxyindole + CO2. In terms of biological role, tautomerization of D-dopachrome with decarboxylation to give 5,6-dihydroxyindole (DHI). The sequence is that of D-dopachrome decarboxylase (Ddt) from Mus musculus (Mouse).